Consider the following 1075-residue polypeptide: Ataxin-2-like protein (1075 aa).

An N-acetylmethionine modification is found at M1. Residues 1–12 are compositionally biased toward low complexity; sequence MLKPQPLQQPSQ. Residues 1–115 are disordered; that stretch reads MLKPQPLQQP…KGPPQSPVFE (115 aa). The interaction with MPL stretch occupies residues 98 to 121; sequence SARGQSTGKGPPQSPVFEGVYNNS. Phosphoserine occurs at positions 103 and 111. Y118 carries the phosphotyrosine modification. One can recognise a Sm domain in the interval 122 to 199; the sequence is RMLHFLTAVV…VMLVHFRNVD (78 aa). K207 is modified (N6-acetyllysine). Phosphoserine is present on S238. Position 264 is a phosphotyrosine (Y264). Residue S306 is modified to Phosphoserine. Y309 is subject to Phosphotyrosine. Positions 316-328 are enriched in basic and acidic residues; sequence ENDDGRTEEEKHS. Disordered stretches follow at residues 316 to 521, 551 to 697, 733 to 770, 820 to 849, 865 to 940, and 1022 to 1045; these read ENDD…LEPQ, QFKL…SIPV, VSNSVPGQQGKYRGAKGSLPPQRSDQHQPASAPPMMQA, SNPRMLTSGSHPQAIVSSSTPQYPSAEQPT, ATQL…SSFP, and PYIGHPQGEQPGQAPGFPGGADDR. Residues 330 to 342 show a composition bias toward polar residues; that stretch reads VQRQGSGRESPSL. A phosphoserine mark is found at S335 and S339. K348 participates in a covalent cross-link: Glycyl lysine isopeptide (Lys-Gly) (interchain with G-Cter in SUMO2). Y349 is subject to Phosphotyrosine. An Asymmetric dimethylarginine modification is found at R361. The segment covering 363–380 has biased composition (low complexity); sequence GVRCSSSRGGRPGLSSLP. Residues S391 and S409 each carry the phosphoserine modification. Over residues 421 to 433 the composition is skewed to polar residues; it reads TLSSPSNRPSGET. A Phosphoserine modification is found at S449. Low complexity-rich tracts occupy residues 450–462 and 471–485; these read PKSAAPAPISASC and VPTSSASIPVTSSVS. 2 positions are modified to phosphoserine: S493 and S496. The span at 505 to 516 shows a compositional bias: basic and acidic residues; it reads DVKELSTKEPGR. S557, S558, S559, and S563 each carry phosphoserine. The span at 571 to 584 shows a compositional bias: basic and acidic residues; sequence ILKEEPKGKEKEVD. S594 carries the post-translational modification Phosphoserine. T632 bears the Phosphothreonine mark. S634, S674, S680, and S684 each carry phosphoserine. Low complexity-rich tracts occupy residues 678 to 694 and 761 to 770; these read STSTPTSPGPRTHSTPS and PASAPPMMQA. Positions 874–898 are enriched in polar residues; it reads QPATTPTGSQPQSQHAAPSPVQHQA. 2 stretches are compositionally biased toward low complexity: residues 931 to 940 and 1025 to 1037; these read SAQSPQSSFP and GHPQGEQPGQAPG.

The protein belongs to the ataxin-2 family. In terms of assembly, interacts with MPL/TPOR and EPOR and dissociates after ligand stimulation. Interacts with DDX6, G3BP1, and ATXN2. Interacts with PRMT1. Interacts with CIC and ATXN1. In terms of processing, thrombopoietin triggers the phosphorylation on tyrosine residues in a way that is dependent on MPL C-terminal domain. Post-translationally, asymmetrically dimethylated. Probably methylated by PRMT1. Expressed at high levels in thymus, lymph node, spleen, fetal kidney and adult testis. Constitutively associated with MPL and EPOR in hematopoietic cells.

Its subcellular location is the membrane. It is found in the cytoplasm. The protein resides in the nucleus speckle. It localises to the cytoplasmic granule. In terms of biological role, involved in the regulation of stress granule and P-body formation. This is Ataxin-2-like protein (ATXN2L) from Homo sapiens (Human).